Here is a 180-residue protein sequence, read N- to C-terminus: Inner membrane-spanning protein YciB (180 aa).

5 helical membrane passes run 25–45 (QNAT…CYII), 49–69 (VSKL…ITLI), 76–96 (IKIK…MSGI), 118–138 (ITLS…NEIV), and 150–170 (FKVF…LPLL).

It belongs to the YciB family.

Its subcellular location is the cell inner membrane. Its function is as follows. Plays a role in cell envelope biogenesis, maintenance of cell envelope integrity and membrane homeostasis. This Rickettsia akari (strain Hartford) protein is Inner membrane-spanning protein YciB.